A 435-amino-acid chain; its full sequence is Mitochondrial association factor 1 form b0 (435 aa).

Positions 1-27 are cleaved as a signal peptide; it reads MWRIWRCRLSFLFVTGCLLGALTAGLG. At 28 to 96 the chain is on the vacuolar side; sequence SQMSDSVGRN…VTARRRRNRR (69 aa). A disordered region spans residues 43-89; that stretch reads GVADASQEAGDVVEERTERTEEQVFAPGPPRRHSSESLFPRNPSVTA. The segment covering 55-64 has biased composition (basic and acidic residues); sequence VEERTERTEE. Residues 97–117 form a helical membrane-spanning segment; the sequence is ITLIATAVGVAVILAALYVLR. The Cytoplasmic segment spans residues 118 to 435; the sequence is RRRAQPPQEP…ESTYLASMLD (318 aa). A disordered region spans residues 120 to 162; sequence RAQPPQEPEPPTRLRTPRPRAPSGQQQPSESEPPAGVPMKPGS.

The protein localises to the parasitophorous vacuole membrane. Functionally, during host cell infection by tachyzoites, does not play a role in tethering the parasitophorous vacuole to the host mitochondria. This Toxoplasma gondii protein is Mitochondrial association factor 1 form b0.